A 245-amino-acid chain; its full sequence is Enolase-phosphatase E1 (245 aa).

Belongs to the HAD-like hydrolase superfamily. MasA/MtnC family. In terms of assembly, monomer. Mg(2+) serves as cofactor.

It catalyses the reaction 5-methylsulfanyl-2,3-dioxopentyl phosphate + H2O = 1,2-dihydroxy-5-(methylsulfanyl)pent-1-en-3-one + phosphate. The protein operates within amino-acid biosynthesis; L-methionine biosynthesis via salvage pathway; L-methionine from S-methyl-5-thio-alpha-D-ribose 1-phosphate: step 3/6. It participates in amino-acid biosynthesis; L-methionine biosynthesis via salvage pathway; L-methionine from S-methyl-5-thio-alpha-D-ribose 1-phosphate: step 4/6. Functionally, bifunctional enzyme that catalyzes the enolization of 2,3-diketo-5-methylthiopentyl-1-phosphate (DK-MTP-1-P) into the intermediate 2-hydroxy-3-keto-5-methylthiopentenyl-1-phosphate (HK-MTPenyl-1-P), which is then dephosphorylated to form the acireductone 1,2-dihydroxy-3-keto-5-methylthiopentene (DHK-MTPene). The protein is Enolase-phosphatase E1 of Synechococcus sp. (strain CC9902).